We begin with the raw amino-acid sequence, 524 residues long: Pentatricopeptide repeat-containing protein At1g02150 (524 aa).

PPR repeat units lie at residues 168–202, 203–237, 238–268, 274–304, 309–339, 344–378, and 379–413; these read DRRVYGSLLNAYVRAKSREKAEALLNTMRDKGYAL, HPLPFNVMMTLYMNLREYDKVDAMVFEMKQKDIRL, DIYSYNIWLSSCGSLGSVEKMELVYQQMKSD, NWTTFSTMATMYIKMGETEKAEDALRKVEAR, NRIPYHYLLSLYGSLGNKKELYRVWHVYKSV, PNLGYHALVSSLVRMGDIEGAEKVYEEWLPVKSSY, and DPRIPNLLMNAYVKNDQLETAEGLFDHMVEMGGKP.

This sequence belongs to the PPR family. P subfamily.

The chain is Pentatricopeptide repeat-containing protein At1g02150 from Arabidopsis thaliana (Mouse-ear cress).